The primary structure comprises 118 residues: Large ribosomal subunit protein bL20 (118 aa).

The protein belongs to the bacterial ribosomal protein bL20 family.

Its function is as follows. Binds directly to 23S ribosomal RNA and is necessary for the in vitro assembly process of the 50S ribosomal subunit. It is not involved in the protein synthesizing functions of that subunit. This Oceanobacillus iheyensis (strain DSM 14371 / CIP 107618 / JCM 11309 / KCTC 3954 / HTE831) protein is Large ribosomal subunit protein bL20.